The sequence spans 122 residues: Large ribosomal subunit protein uL14 (122 aa).

The protein belongs to the universal ribosomal protein uL14 family. As to quaternary structure, part of the 50S ribosomal subunit. Forms a cluster with proteins L3 and L19. In the 70S ribosome, L14 and L19 interact and together make contacts with the 16S rRNA in bridges B5 and B8.

Its function is as follows. Binds to 23S rRNA. Forms part of two intersubunit bridges in the 70S ribosome. The polypeptide is Large ribosomal subunit protein uL14 (Rickettsia felis (strain ATCC VR-1525 / URRWXCal2) (Rickettsia azadi)).